The following is a 310-amino-acid chain: Olfactory receptor 4C16 (310 aa).

Residues 1 to 23 lie on the Extracellular side of the membrane; that stretch reads MQLNNNVTEFILLGLTQDPFWKK. N6 is a glycosylation site (N-linked (GlcNAc...) asparagine). Residues 24–47 form a helical membrane-spanning segment; the sequence is IVFVIFLRLYLGTLLGNLLIIISV. Over 48 to 55 the chain is Cytoplasmic; the sequence is KTSQALKN. A helical membrane pass occupies residues 56-77; sequence PMFFFLFYLSLSDTCLSTSITP. Topologically, residues 78–98 are extracellular; that stretch reads RMIVDALLKKTTISFSECMIQ. The cysteines at positions 95 and 187 are disulfide-linked. A helical membrane pass occupies residues 99–118; that stretch reads VFSSHVFGCLEIFILILTAV. Topologically, residues 119–137 are cytoplasmic; the sequence is DRYVDICKPLHYMTIISQW. A helical transmembrane segment spans residues 138-156; that stretch reads VCGVLMAVAWVGSCVHSLV. Residues 157–193 lie on the Extracellular side of the membrane; the sequence is QIFLALSLPFCGPNVINHCFCDLQPLLKQACSETYVV. The chain crosses the membrane as a helical span at residues 194–217; the sequence is NLLLVSNSGAICAVSYVMLIFSYV. Residues 218 to 233 are Cytoplasmic-facing; it reads IFLHSLRNHSAEVIKK. The chain crosses the membrane as a helical span at residues 234–256; that stretch reads ALSTCVSHIIVVILFFGPCIFMY. Topologically, residues 257-267 are extracellular; sequence TCLATVFPMDK. The helical transmembrane segment at 268–287 threads the bilayer; that stretch reads MIAVFYTVGTSFLNPVIYTL. Over 288–310 the chain is Cytoplasmic; sequence KNTEVKSAMRKLWSKKLITDDKR.

It belongs to the G-protein coupled receptor 1 family.

Its subcellular location is the cell membrane. Its function is as follows. Odorant receptor. This chain is Olfactory receptor 4C16 (OR4C16), found in Homo sapiens (Human).